Here is a 989-residue protein sequence, read N- to C-terminus: Phosphoenolpyruvate carboxylase (989 aa).

Active-site residues include H175 and K630.

Belongs to the PEPCase type 1 family. It depends on Mg(2+) as a cofactor.

The catalysed reaction is oxaloacetate + phosphate = phosphoenolpyruvate + hydrogencarbonate. Functionally, forms oxaloacetate, a four-carbon dicarboxylic acid source for the tricarboxylic acid cycle. The sequence is that of Phosphoenolpyruvate carboxylase from Prochlorococcus marinus (strain MIT 9215).